Consider the following 1553-residue polypeptide: DNA topoisomerase 2-alpha (1553 aa).

The tract at residues 1 to 25 (MELLDSPAPLRPLHDNPRLPKADGA) is disordered. Residues 12–25 (PLHDNPRLPKADGA) are compositionally biased toward basic and acidic residues. Residues Asn-92, Asn-121, 149 to 151 (SSN), and 162 to 169 (GRNGYGAK) contribute to the ATP site. The interaction with DNA stretch occupies residues 343 to 345 (KKK). Position 377–379 (377–379 (QTK)) interacts with ATP. Positions 456–573 (CTLILTEGDS…SLLRHNFLEE (118 aa)) constitute a Toprim domain. Mg(2+) contacts are provided by Glu-462, Asp-542, and Asp-544. The 448-residue stretch at 716-1163 (IPSLVDGLKP…SPSDLWKEDL (448 aa)) folds into the Topo IIA-type catalytic domain. The active-site O-(5'-phospho-DNA)-tyrosine intermediate is the Tyr-806. The interval 991-1000 (KLQTNLTCNS) is interaction with DNA. Disordered regions lie at residues 1095-1114 (QNKE…AATG) and 1186-1553 (TGKP…DDMF). Over residues 1098-1107 (EEEEGDESGE) the composition is skewed to acidic residues. The segment covering 1242–1262 (SEKNESDEKQEGNSSGDKEPS) has biased composition (basic and acidic residues). Acidic residues-rich tracts occupy residues 1300 to 1310 (SESDSESDDFE) and 1334 to 1349 (SDAD…EYQE). Over residues 1371 to 1385 (VPKEKKGKAPKEKPL) the composition is skewed to basic and acidic residues. Residues 1413–1432 (PRAQAVPKKPAAAKKGSTAK) show a composition bias toward low complexity. Over residues 1444 to 1454 (KKKAAPKAPRR) the composition is skewed to basic residues. The segment covering 1517–1532 (SIDLTADSPAAAAPRT) has biased composition (low complexity).

This sequence belongs to the type II topoisomerase family. Homodimer. Mg(2+) is required as a cofactor. Mn(2+) serves as cofactor. The cofactor is Ca(2+).

It localises to the cytoplasm. The protein resides in the nucleus. The protein localises to the nucleoplasm. Its subcellular location is the nucleolus. The enzyme catalyses ATP-dependent breakage, passage and rejoining of double-stranded DNA.. Its function is as follows. Key decatenating enzyme that alters DNA topology by binding to two double-stranded DNA molecules, generating a double-stranded break in one of the strands, passing the intact strand through the broken strand, and religating the broken strand. May play a role in the regulation of circadian rhythm. This is DNA topoisomerase 2-alpha (TOP2A) from Gallus gallus (Chicken).